The primary structure comprises 274 residues: tRNA-cytidine(32) 2-sulfurtransferase (274 aa).

Residues 40-45 (SGGKDS) carry the PP-loop motif motif. 3 residues coordinate [4Fe-4S] cluster: cysteine 115, cysteine 118, and cysteine 206.

The protein belongs to the TtcA family. As to quaternary structure, homodimer. Requires Mg(2+) as cofactor. [4Fe-4S] cluster is required as a cofactor.

It is found in the cytoplasm. It carries out the reaction cytidine(32) in tRNA + S-sulfanyl-L-cysteinyl-[cysteine desulfurase] + AH2 + ATP = 2-thiocytidine(32) in tRNA + L-cysteinyl-[cysteine desulfurase] + A + AMP + diphosphate + H(+). It participates in tRNA modification. Its function is as follows. Catalyzes the ATP-dependent 2-thiolation of cytidine in position 32 of tRNA, to form 2-thiocytidine (s(2)C32). The sulfur atoms are provided by the cysteine/cysteine desulfurase (IscS) system. The sequence is that of tRNA-cytidine(32) 2-sulfurtransferase from Pseudomonas fluorescens (strain ATCC BAA-477 / NRRL B-23932 / Pf-5).